A 90-amino-acid polypeptide reads, in one-letter code: Small ribosomal subunit protein uS15 (90 aa).

The protein belongs to the universal ribosomal protein uS15 family. In terms of assembly, part of the 30S ribosomal subunit. Forms a bridge to the 50S subunit in the 70S ribosome, contacting the 23S rRNA.

In terms of biological role, one of the primary rRNA binding proteins, it binds directly to 16S rRNA where it helps nucleate assembly of the platform of the 30S subunit by binding and bridging several RNA helices of the 16S rRNA. Forms an intersubunit bridge (bridge B4) with the 23S rRNA of the 50S subunit in the ribosome. The polypeptide is Small ribosomal subunit protein uS15 (Tropheryma whipplei (strain TW08/27) (Whipple's bacillus)).